A 163-amino-acid polypeptide reads, in one-letter code: MALNLQDKQAIVAEVNEAAKGALSAVVADSRGVTVEKMTELRKSAREAGVTMRVVRNTLLRRAVEGTEFECLTDTFTGPTLIAFSHEHPGAAARLFTEFAKANKEFELKGAAFEGKVQDVEFLATLPTYEEAIARLMGTMKEAAAGKLVRTLAALRDKLQEAA.

This sequence belongs to the universal ribosomal protein uL10 family. In terms of assembly, part of the ribosomal stalk of the 50S ribosomal subunit. The N-terminus interacts with L11 and the large rRNA to form the base of the stalk. The C-terminus forms an elongated spine to which L12 dimers bind in a sequential fashion forming a multimeric L10(L12)X complex.

In terms of biological role, forms part of the ribosomal stalk, playing a central role in the interaction of the ribosome with GTP-bound translation factors. This chain is Large ribosomal subunit protein uL10, found in Actinobacillus pleuropneumoniae serotype 5b (strain L20).